A 536-amino-acid chain; its full sequence is Proto-oncogene tyrosine-protein kinase Src (536 aa).

Residues 1-53 (MGSNKSKPKDASQRRRSLEPAENVHGAGGGAFPASQTPSKPASADGHRGPSAA) are disordered. A lipid anchor (N-myristoyl glycine) is attached at Gly2. Over residues 7–19 (KPKDASQRRRSLE) the composition is skewed to basic and acidic residues. A Phosphoserine modification is found at Ser17. Residue Ser75 is modified to Phosphoserine; by CDK5. Positions 84–145 (GGVTTFVALY…PSNYVAPSDS (62 aa)) constitute an SH3 domain. Residues 151–248 (WYFGKITRRE…GLCHRLTTVC (98 aa)) form the SH2 domain. Position 187 is a phosphotyrosine (Tyr187). A Protein kinase domain is found at 270 to 523 (LRLEVKLGQG…YLQAFLEDYF (254 aa)). ATP-binding positions include 276-284 (LGQGCFGEV) and Lys298. The active-site Proton acceptor is the Asp389. At Tyr419 the chain carries Phosphotyrosine; by autocatalysis. Tyr419 bears the Phosphotyrosine; by FAK2 mark. Position 530 is a phosphotyrosine; by CSK (Tyr530).

This sequence belongs to the protein kinase superfamily. Tyr protein kinase family. SRC subfamily. As to quaternary structure, part of a complex comprised of PTPRA, BCAR1, BCAR3 (via SH2 domain) and SRC; the formation of the complex is dependent on integrin mediated-tyrosine phosphorylation of PTPRA. Interacts with DDEF1/ASAP1; via the SH3 domain. Interacts with CCPG1. Identified in a complex containing FGFR4, NCAM1, CDH2, PLCG1, FRS2, SRC, SHC1, GAP43 and CTTN. Interacts with ERBB2, STAT1 and PNN. Interacts with DDR1, DDR2 and DAB2. Interacts with CDCP1, TGFB1I1 and TOM1L2. Interacts with the cytoplasmic domain of MUC1, phosphorylates it and increases binding of MUC1 with beta-catenin. Interacts with RALGPS1; via the SH3 domain. Interacts with CAV2 (tyrosine phosphorylated form). Interacts (via the SH3 domain and the protein kinase domain) with ARRB1; the interaction is independent of the phosphorylation state of SRC C-terminus. Interacts with ARRB1 and ARRB2. Interacts with SRCIN1. Interacts with NDFIP2 and more weakly with NDFIP1. Interacts with PIK3CA and/or PIK3C2B, PTK2/FAK1 and ESR1 (dimethylated on arginine). Interacts with FASLG. Interacts (via SH2 domain) with the 'Tyr-402' phosphorylated form of PTK2B/PYK2. Interacts (via SH2 domain) with FLT3 (tyrosine phosphorylated). Interacts with PDGFRA (tyrosine phosphorylated). Interacts with CSF1R. Interacts (via SH2 and SH3 domain) with TNK2. Interacts (via protein kinase domain) with the tyrosine phosphorylated form of RUNX3 (via runt domain). Interacts with TRAF3 (via RING-type zinc finger domain). Interacts with RIGI, MAVS and TBK1. Interacts (via SH2 domain) with RACK1; the interaction is enhanced by tyrosine phosphorylation of RACK1 and inhibits SRC activity. Interacts with EPHB1; activates the MAPK/ERK cascade to regulate cell migration. Interacts with FCAMR. Interacts (via SH2 domain) with the 'Tyr-9' phosphorylated form of PDPK1. Interacts with AMOTL2; this interaction regulates the translocation of phosphorylated SRC to peripheral cell-matrix adhesion sites. Interacts with TRAP1. Interacts with CBLC; the interaction is enhanced when SRC is phosphorylated at Tyr-419. Interacts with ARHGEF5. Interacts (via cytoplasmic domain) with CEACAM1 (via SH2 domain); this interaction is regulated by trans-homophilic cell adhesion. Interacts with MPP2. Interacts with PRR7. Interacts (via kinase domain and to a lesser extent the SH2 domain) directly with PDLIM4; this interaction results in PTPN13-mediated dephosphorylation of this protein leading to its inactivation. Interacts with P85 (PIK3R1 or PIK3R2). Interacts with HNRNPA2B1. Interacts with IL6ST/gp130. Interacts (via SH3 domain) with PELP1 in the presence of 17-beta-estradiol. Interacts with AMBRA1. (Microbial infection) Interacts with HEV ORF3 protein; via the SH3 domain. In terms of assembly, (Microbial infection) Interacts (via SH2 domain) with HCV non-structural protein 5A (via N-terminus). In terms of processing, myristoylated at Gly-2, and this is essential for targeting to membranes. Post-translationally, dephosphorylated at Tyr-530 by PTPRJ. Phosphorylated on Tyr-530 by c-Src kinase (CSK). The phosphorylated form is termed pp60c-src. Dephosphorylated by PTPRJ at Tyr-419. Normally maintained in an inactive conformation with the SH2 domain engaged with Tyr-530, the SH3 domain engaged with the SH2-kinase linker, and Tyr-419 dephosphorylated. Dephosphorylation of Tyr-530 as a result of protein tyrosine phosphatase (PTP) action disrupts the intramolecular interaction between the SH2 domain and Tyr-530, Tyr-419 can then become autophosphorylated, resulting in SRC activation. Phosphorylation of Tyr-530 by CSK allows this interaction to reform, resulting in SRC inactivation. CDK5-mediated phosphorylation at Ser-75 targets SRC to ubiquitin-dependent degradation and thus leads to cytoskeletal reorganization. Phosphorylated by PTK2/FAK1; this enhances kinase activity. Phosphorylated by PTK2B/PYK2; this enhances kinase activity. Upon activation of IL6ST by IL6, Tyr-419 is phosphorylated and Tyr-530 dephosphorylated. Displays reduced levels of autophosphorylation at Tyr-419 compared to isoforms 2 and 3. In terms of processing, displays enhanced levels of autophosphorylation at Tyr-419 compared to isoform 1. Post-translationally, displays enhanced levels of autophosphorylation at Tyr-419 compared to isoform 1. Shows reduced phosphorylation at Tyr-527 compared to isoforms 1 and 2. S-nitrosylation is important for activation of its kinase activity. In terms of processing, ubiquitinated in response to CDK5-mediated phosphorylation. Ubiquitination mediated by CBLC requires SRC autophosphorylation at Tyr-419 and may lead to lysosomal degradation. Expressed ubiquitously. Expressed in the skin (at protein level). Platelets, neurons and osteoclasts express 5-fold to 200-fold higher levels than most other tissues. In terms of tissue distribution, expressed in spleen and liver. As to expression, expressed in brain.

It localises to the cell membrane. The protein resides in the mitochondrion inner membrane. Its subcellular location is the nucleus. It is found in the cytoplasm. The protein localises to the cytoskeleton. It localises to the perinuclear region. The protein resides in the cell junction. Its subcellular location is the focal adhesion. The enzyme catalyses L-tyrosyl-[protein] + ATP = O-phospho-L-tyrosyl-[protein] + ADP + H(+). Phosphorylation by CSK at Tyr-530 inhibits kinase activity. Inhibitory phosphorylation at Tyr-530 is enhanced by heme. Further phosphorylation by CDK1 partially reactivates CSK-inactivated SRC and facilitates complete reactivation by protein tyrosine phosphatase PTPRC. Integrin engagement stimulates kinase activity. Phosphorylation by PTK2/FAK1 enhances kinase activity. Butein and pseudosubstrate-based peptide inhibitors like CIYKYYF act as inhibitors. Phosphorylation at Tyr-419 increases kinase activity. In terms of biological role, non-receptor protein tyrosine kinase which is activated following engagement of many different classes of cellular receptors including immune response receptors, integrins and other adhesion receptors, receptor protein tyrosine kinases, G protein-coupled receptors as well as cytokine receptors. Participates in signaling pathways that control a diverse spectrum of biological activities including gene transcription, immune response, cell adhesion, cell cycle progression, apoptosis, migration, and transformation. Due to functional redundancy between members of the SRC kinase family, identification of the specific role of each SRC kinase is very difficult. SRC appears to be one of the primary kinases activated following engagement of receptors and plays a role in the activation of other protein tyrosine kinase (PTK) families. Receptor clustering or dimerization leads to recruitment of SRC to the receptor complexes where it phosphorylates the tyrosine residues within the receptor cytoplasmic domains. Plays an important role in the regulation of cytoskeletal organization through phosphorylation of specific substrates such as AFAP1. Phosphorylation of AFAP1 allows the SRC SH2 domain to bind AFAP1 and to localize to actin filaments. Cytoskeletal reorganization is also controlled through the phosphorylation of cortactin (CTTN). When cells adhere via focal adhesions to the extracellular matrix, signals are transmitted by integrins into the cell resulting in tyrosine phosphorylation of a number of focal adhesion proteins, including PTK2/FAK1 and paxillin (PXN). In addition to phosphorylating focal adhesion proteins, SRC is also active at the sites of cell-cell contact adherens junctions and phosphorylates substrates such as beta-catenin (CTNNB1), delta-catenin (CTNND1), and plakoglobin (JUP). Another type of cell-cell junction, the gap junction, is also a target for SRC, which phosphorylates connexin-43 (GJA1). SRC is implicated in regulation of pre-mRNA-processing and phosphorylates RNA-binding proteins such as KHDRBS1. Phosphorylates PKP3 at 'Tyr-195' in response to reactive oxygen species, which may cause the release of PKP3 from desmosome cell junctions into the cytoplasm. Also plays a role in PDGF-mediated tyrosine phosphorylation of both STAT1 and STAT3, leading to increased DNA binding activity of these transcription factors. Involved in the RAS pathway through phosphorylation of RASA1 and RASGRF1. Plays a role in EGF-mediated calcium-activated chloride channel activation. Required for epidermal growth factor receptor (EGFR) internalization through phosphorylation of clathrin heavy chain (CLTC and CLTCL1) at 'Tyr-1477'. Involved in beta-arrestin (ARRB1 and ARRB2) desensitization through phosphorylation and activation of GRK2, leading to beta-arrestin phosphorylation and internalization. Has a critical role in the stimulation of the CDK20/MAPK3 mitogen-activated protein kinase cascade by epidermal growth factor. Might be involved not only in mediating the transduction of mitogenic signals at the level of the plasma membrane but also in controlling progression through the cell cycle via interaction with regulatory proteins in the nucleus. Plays an important role in osteoclastic bone resorption in conjunction with PTK2B/PYK2. Both the formation of a SRC-PTK2B/PYK2 complex and SRC kinase activity are necessary for this function. Recruited to activated integrins by PTK2B/PYK2, thereby phosphorylating CBL, which in turn induces the activation and recruitment of phosphatidylinositol 3-kinase to the cell membrane in a signaling pathway that is critical for osteoclast function. Promotes energy production in osteoclasts by activating mitochondrial cytochrome C oxidase. Phosphorylates DDR2 on tyrosine residues, thereby promoting its subsequent autophosphorylation. Phosphorylates RUNX3 and COX2 on tyrosine residues, TNK2 on 'Tyr-284' and CBL on 'Tyr-731'. Enhances RIGI-elicited antiviral signaling. Phosphorylates PDPK1 at 'Tyr-9', 'Tyr-373' and 'Tyr-376'. Phosphorylates BCAR1 at 'Tyr-128'. Phosphorylates CBLC at multiple tyrosine residues, phosphorylation at 'Tyr-341' activates CBLC E3 activity. Phosphorylates synaptic vesicle protein synaptophysin (SYP). Involved in anchorage-independent cell growth. Required for podosome formation. Mediates IL6 signaling by activating YAP1-NOTCH pathway to induce inflammation-induced epithelial regeneration. Phosphorylates OTUB1, promoting deubiquitination of RPTOR. Phosphorylates caspase CASP8 at 'Tyr-380' which negatively regulates CASP8 processing and activation, down-regulating CASP8 proapoptotic function. Functionally, non-receptor protein tyrosine kinase which phosphorylates synaptophysin with high affinity. Non-receptor protein tyrosine kinase which shows higher basal kinase activity than isoform 1, possibly due to weakened intramolecular interactions which enhance autophosphorylation of Tyr-419 and subsequent activation. The SH3 domain shows reduced affinity with the linker sequence between the SH2 and kinase domains which may account for the increased basal activity. Displays altered substrate specificity compared to isoform 1, showing weak affinity for synaptophysin and for peptide substrates containing class I or class II SH3 domain-binding motifs. Plays a role in L1CAM-mediated neurite elongation, possibly by acting downstream of L1CAM to drive cytoskeletal rearrangements involved in neurite outgrowth. Its function is as follows. Non-receptor protein tyrosine kinase which shows higher basal kinase activity than isoform 1, possibly due to weakened intramolecular interactions which enhance autophosphorylation of Tyr-419 and subsequent activation. The SH3 domain shows reduced affinity with the linker sequence between the SH2 and kinase domains which may account for the increased basal activity. Displays altered substrate specificity compared to isoform 1, showing weak affinity for synaptophysin and for peptide substrates containing class I or class II SH3 domain-binding motifs. Plays a role in neurite elongation. This Homo sapiens (Human) protein is Proto-oncogene tyrosine-protein kinase Src.